A 212-amino-acid polypeptide reads, in one-letter code: MPIREIRHPLIRHKLGLMRRADISTKNFRELAQEVGSILTYEATSDLPLEHYNIDGWCGPVQVEKISGKKITVVPILRAGIGMLDGVLSLIPGAKVSAVGIARNEETFKAQTYLEKLVPEIEQRLAIIIDPMLATGGSMVATIDMLKKAGCKEIRALVLVAAPEGIAAVEAAHPDVLILTASIDERLDEHGYIVPGLGDAGDKIFGTKQKDI.

Residues Arg-78, Arg-103, and 130–138 (DPMLATGGS) contribute to the 5-phospho-alpha-D-ribose 1-diphosphate site. Residues Ile-193 and 198–200 (GDA) each bind uracil. Asp-199 provides a ligand contact to 5-phospho-alpha-D-ribose 1-diphosphate.

This sequence belongs to the UPRTase family. Requires Mg(2+) as cofactor.

It catalyses the reaction UMP + diphosphate = 5-phospho-alpha-D-ribose 1-diphosphate + uracil. Its pathway is pyrimidine metabolism; UMP biosynthesis via salvage pathway; UMP from uracil: step 1/1. With respect to regulation, allosterically activated by GTP. Its function is as follows. Catalyzes the conversion of uracil and 5-phospho-alpha-D-ribose 1-diphosphate (PRPP) to UMP and diphosphate. This is Uracil phosphoribosyltransferase from Stutzerimonas stutzeri (strain A1501) (Pseudomonas stutzeri).